A 410-amino-acid polypeptide reads, in one-letter code: Acetate kinase (410 aa).

A Mg(2+)-binding site is contributed by N7. K14 lines the ATP pocket. A substrate-binding site is contributed by R88. D145 (proton donor/acceptor) is an active-site residue. ATP is bound by residues 203-207 (HAGNG), 278-280 (DTR), and 326-330 (GIGEN). E379 contacts Mg(2+).

This sequence belongs to the acetokinase family. Homodimer. It depends on Mg(2+) as a cofactor. Mn(2+) is required as a cofactor.

The protein localises to the cytoplasm. It catalyses the reaction acetate + ATP = acetyl phosphate + ADP. It participates in metabolic intermediate biosynthesis; acetyl-CoA biosynthesis; acetyl-CoA from acetate: step 1/2. Functionally, catalyzes the formation of acetyl phosphate from acetate and ATP. Can also catalyze the reverse reaction. This Chlorante-Aster yellows phytoplasma protein is Acetate kinase.